A 196-amino-acid chain; its full sequence is RNA pyrophosphohydrolase (196 aa).

Residues 6-149 enclose the Nudix hydrolase domain; the sequence is GYRPNVGIVI…KRDVYRKVMK (144 aa). The short motif at 38-59 is the Nudix box element; it reads GGINDNESAEQAMYRELHEEVG.

This sequence belongs to the Nudix hydrolase family. RppH subfamily. It depends on a divalent metal cation as a cofactor.

Its function is as follows. Accelerates the degradation of transcripts by removing pyrophosphate from the 5'-end of triphosphorylated RNA, leading to a more labile monophosphorylated state that can stimulate subsequent ribonuclease cleavage. The protein is RNA pyrophosphohydrolase of Haemophilus influenzae (strain PittEE).